A 185-amino-acid chain; its full sequence is ATP-dependent protease subunit HslV (185 aa).

Threonine 6 is an active-site residue. Na(+)-binding residues include glycine 162, cysteine 165, and threonine 168.

This sequence belongs to the peptidase T1B family. HslV subfamily. A double ring-shaped homohexamer of HslV is capped on each side by a ring-shaped HslU homohexamer. The assembly of the HslU/HslV complex is dependent on binding of ATP.

The protein resides in the cytoplasm. The enzyme catalyses ATP-dependent cleavage of peptide bonds with broad specificity.. Its activity is regulated as follows. Allosterically activated by HslU binding. In terms of biological role, protease subunit of a proteasome-like degradation complex believed to be a general protein degrading machinery. The chain is ATP-dependent protease subunit HslV from Nitratidesulfovibrio vulgaris (strain DSM 19637 / Miyazaki F) (Desulfovibrio vulgaris).